Here is a 522-residue protein sequence, read N- to C-terminus: MPAGGFVVGDGQKAYPGKLTPFVLFTCVVAAMGGLIFGYDIGISGGVTSMPSFLKRFFPSVYRKQQEDASTNQYCQYDSPTLTMFTSSLYLAALISSLVASTVTRKFGRRLSMLFGGILFCAGALINGFAKHVWMLIVGRILLGFGIGFANQAVPLYLSEMAPYKYRGALNIGFQLSITIGILVAEVLNYFFAKIKGGWGWRLSLGGAVVPALIITIGSLVLPDTPNSMIERGQHEEAKTKLRRIRGVDDVSQEFDDLVAASKESQSIEHPWRNLLRRKYRPHLTMAVMIPFFQQLTGINVIMFYAPVLFNTIGFTTDASLMSAVVTGSVNVAATLVSIYGVDRWGRRFLFLEGGTQMLICQAVVAACIGAKFGVDGTPGELPKWYAIVVVTFICIYVAGFAWSWGPLGWLVPSEIFPLEIRSAAQSITVSVNMIFTFIIAQIFLTMLCHLKFGLFLVFAFFVVVMSIFVYIFLPETKGIPIEEMGQVWRSHWYWSRFVEDGEYGNALEMGKNSNQAGTKHV.

Residues Met1–Phe22 lie on the Cytoplasmic side of the membrane. A helical membrane pass occupies residues Val23–Ile43. Residues Ser44–Ser79 are Extracellular-facing. A helical membrane pass occupies residues Pro80–Ala100. Residues Ser101–Gly117 lie on the Cytoplasmic side of the membrane. Residues Ile118–Val138 form a helical membrane-spanning segment. Over Gly139–Arg140 the chain is Extracellular. The helical transmembrane segment at Ile141–Met161 threads the bilayer. The Cytoplasmic portion of the chain corresponds to Ala162–Asn171. The helical transmembrane segment at Ile172–Phe192 threads the bilayer. Over Ala193 to Arg202 the chain is Extracellular. A helical transmembrane segment spans residues Leu203–Pro223. At Asp224–Met289 the chain is on the cytoplasmic side. The residue at position 252 (Ser252) is a Phosphoserine. Residues Ile290–Phe310 form a helical membrane-spanning segment. Topologically, residues Asn311 to Leu321 are extracellular. Residues Met322–Val342 traverse the membrane as a helical segment. Over Asp343–Arg348 the chain is Cytoplasmic. Residues Phe349–Ile369 traverse the membrane as a helical segment. Residues Gly370–Lys384 are Extracellular-facing. Residues Trp385–Trp405 traverse the membrane as a helical segment. Topologically, residues Gly406–Ser427 are cytoplasmic. Residues Ile428–Leu448 traverse the membrane as a helical segment. At Cys449–Lys452 the chain is on the extracellular side. Residues Phe453–Phe473 form a helical membrane-spanning segment. Topologically, residues Leu474–Val522 are cytoplasmic.

This sequence belongs to the major facilitator superfamily. Sugar transporter (TC 2.A.1.1) family. As to expression, mostly expressed in young leaves, especially in guard cells (at protein level). Also present in roots.

It is found in the cell membrane. Its function is as follows. Major hexose transporter. Mediates an active uptake of hexoses, by sugar/hydrogen symport. Can transport glucose, 3-O-methylglucose, fructose, xylose, mannose, galactose, fucose, 2-deoxyglucose and arabinose. Confers sensitivity to galactose in seedlings. This chain is Sugar transport protein 1 (STP1), found in Arabidopsis thaliana (Mouse-ear cress).